The sequence spans 138 residues: Phospholipase A2 homolog 1 (138 aa).

Positions 1 to 16 (MRTLWIMAVLLVGVEG) are cleaved as a signal peptide. Intrachain disulfides connect cysteine 42–cysteine 132, cysteine 44–cysteine 60, cysteine 59–cysteine 111, cysteine 65–cysteine 138, cysteine 66–cysteine 104, cysteine 73–cysteine 97, and cysteine 91–cysteine 102. Residues 121–134 (KKYKNNYLKPFCKK) form an important for membrane-damaging activities in eukaryotes and bacteria; heparin-binding region.

The protein belongs to the phospholipase A2 family. Group II subfamily. K49 sub-subfamily. As to quaternary structure, homodimer; non-covalently linked (probable alternative/compact dimer conformation in solution). As to expression, expressed by the venom gland.

It is found in the secreted. Functionally, snake venom phospholipase A2 homolog that lacks enzymatic and anticoagulant activities. In mice, it induces conspicuous local myonecrosis, edema, and a systemic interleukin-6 response. In vitro, it is cytolytic upon myoblasts, and weakly bactericidal. A model of myotoxic mechanism has been proposed: an apo Lys49-PLA2 is activated by the entrance of a hydrophobic molecule (e.g. fatty acid) at the hydrophobic channel of the protein leading to a reorientation of a monomer. This reorientation causes a transition between 'inactive' to 'active' states, causing alignment of C-terminal and membrane-docking sites (MDoS) side-by-side and putting the membrane-disruption sites (MDiS) in the same plane, exposed to solvent and in a symmetric position for both monomers. The MDoS region stabilizes the toxin on membrane by the interaction of charged residues with phospholipid head groups. Subsequently, the MDiS region destabilizes the membrane with penetration of hydrophobic residues. This insertion causes a disorganization of the membrane, allowing an uncontrolled influx of ions (i.e. calcium and sodium), and eventually triggering irreversible intracellular alterations and cell death. This chain is Phospholipase A2 homolog 1, found in Bothrops atrox (Barba amarilla).